The primary structure comprises 92 residues: CRISPR-associated endoribonuclease Cas2 1 (92 aa).

Mg(2+) is bound at residue Asp-10.

This sequence belongs to the CRISPR-associated endoribonuclease Cas2 protein family. As to quaternary structure, homodimer, forms a heterotetramer with a Cas1 homodimer. It depends on Mg(2+) as a cofactor.

Functionally, CRISPR (clustered regularly interspaced short palindromic repeat), is an adaptive immune system that provides protection against mobile genetic elements (viruses, transposable elements and conjugative plasmids). CRISPR clusters contain sequences complementary to antecedent mobile elements and target invading nucleic acids. CRISPR clusters are transcribed and processed into CRISPR RNA (crRNA). Functions as a ssRNA-specific endoribonuclease. Involved in the integration of spacer DNA into the CRISPR cassette. This Thermodesulfovibrio yellowstonii (strain ATCC 51303 / DSM 11347 / YP87) protein is CRISPR-associated endoribonuclease Cas2 1.